Consider the following 248-residue polypeptide: Cytochrome c oxidase subunit 2 (248 aa).

Topologically, residues 1–36 are mitochondrial intermembrane; sequence MLFFNSILNDAPSSWALYFQDGASPSYLGVTHLNDY. The chain crosses the membrane as a helical span at residues 37-57; sequence LMFYLTFIFIGVIYAICKAVI. The Mitochondrial matrix segment spans residues 58 to 75; the sequence is EYNYNSHPIAAKYTTHGS. Residues 76-100 traverse the membrane as a helical segment; the sequence is IVEFIWTLIPALILILVALPSFKLL. At 101 to 248 the chain is on the mitochondrial intermembrane side; that stretch reads YLLDEVQKPS…DFLAWLEENS (148 aa). H182, C217, E219, C221, H225, and M228 together coordinate Cu cation. Mg(2+) is bound at residue E219.

It belongs to the cytochrome c oxidase subunit 2 family. In terms of assembly, component of the cytochrome c oxidase (complex IV, CIV), a multisubunit enzyme composed of a catalytic core of 3 subunits and several supernumerary subunits. The complex exists as a monomer or a dimer and forms supercomplexes (SCs) in the inner mitochondrial membrane with ubiquinol-cytochrome c oxidoreductase (cytochrome b-c1 complex, complex III, CIII). Cu cation is required as a cofactor.

Its subcellular location is the mitochondrion inner membrane. The catalysed reaction is 4 Fe(II)-[cytochrome c] + O2 + 8 H(+)(in) = 4 Fe(III)-[cytochrome c] + 2 H2O + 4 H(+)(out). In terms of biological role, component of the cytochrome c oxidase, the last enzyme in the mitochondrial electron transport chain which drives oxidative phosphorylation. The respiratory chain contains 3 multisubunit complexes succinate dehydrogenase (complex II, CII), ubiquinol-cytochrome c oxidoreductase (cytochrome b-c1 complex, complex III, CIII) and cytochrome c oxidase (complex IV, CIV), that cooperate to transfer electrons derived from NADH and succinate to molecular oxygen, creating an electrochemical gradient over the inner membrane that drives transmembrane transport and the ATP synthase. Cytochrome c oxidase is the component of the respiratory chain that catalyzes the reduction of oxygen to water. Electrons originating from reduced cytochrome c in the intermembrane space (IMS) are transferred via the dinuclear copper A center (CU(A)) of subunit 2 and heme A of subunit 1 to the active site in subunit 1, a binuclear center (BNC) formed by heme A3 and copper B (CU(B)). The BNC reduces molecular oxygen to 2 water molecules using 4 electrons from cytochrome c in the IMS and 4 protons from the mitochondrial matrix. The sequence is that of Cytochrome c oxidase subunit 2 (cox2) from Schizosaccharomyces pombe (strain 972 / ATCC 24843) (Fission yeast).